The primary structure comprises 326 residues: MAQRVQLTATVSENQLGQRLDQALAEMFPDYSRSRIKEWILNQRVLVNGQLCDKPKEKVLGGERVAIDAEIDEEIRFEAQDIPLDIVYEDDDILVINKPRDLVVHPGAGNPDGTVLNALLHYYPPIADVPRAGIVHRLDKDTTGLMVVAKTVPAQTRLVESLQLREITREYEAVAIGHMTAGGTVNEPISRHPTKRTHMSVHPMGKPAVTHYRIMEHFRVHTRLRLRLETGRTHQIRVHMAHITHPLVGDQVYGGRPRPPKGASEEFISTLRKFDRQALHATMLRLYHPVSGIEMEWHAPIPQDMVDLIDAMRADFEDHKDDVDWL.

An S4 RNA-binding domain is found at 18–91 (QRLDQALAEM…IPLDIVYEDD (74 aa)). The active site involves Asp-139. Residues 183-203 (GTVNEPISRHPTKRTHMSVHP) are disordered.

The protein belongs to the pseudouridine synthase RluA family.

It is found in the cytoplasm. It catalyses the reaction uridine(1911/1915/1917) in 23S rRNA = pseudouridine(1911/1915/1917) in 23S rRNA. Responsible for synthesis of pseudouridine from uracil at positions 1911, 1915 and 1917 in 23S ribosomal RNA. The sequence is that of Ribosomal large subunit pseudouridine synthase D (rluD) from Salmonella typhi.